We begin with the raw amino-acid sequence, 218 residues long: Large ribosomal subunit protein uL2c (218 aa).

Residues 165–192 form a disordered region; it reads GVVKNPVDHPHGGGEGRSPIGRSHPVTP.

Belongs to the universal ribosomal protein uL2 family. In terms of assembly, part of the 50S ribosomal subunit.

It localises to the plastid. Its subcellular location is the chloroplast. In Bigelowiella natans (Pedinomonas minutissima), this protein is Large ribosomal subunit protein uL2c (rpl2).